The following is a 301-amino-acid chain: MSLAVEAVKDFLLKLQDDICEALEAEDGQATFVEDKWTREGGGGGRTRVMVDGAVIEKGGVNFSHVYGKGLPMSSTERHPDIAGCNFEAMGVSLVIHPKNPHVPTSHANVRLFVAEREGKEPVWWFGGGFDLTPYYAVEEDCRDFHQVAQDLCKPFGADVYARFKGWCDEYFFIPYRNEARGIGGLFFDDLNEWPFEKCFEFVQAVGKGYMDAYIPIVNRRKNTPYTEQQVEFQEFRRGRYAEFNLVIDRGTKFGLQSGGRTESILISLPPRARWGYNWQPEPGTPEARLTEYFLTKRQWV.

An important for dimerization region spans residues 49–58 (VMVDGAVIEK). S93 contributes to the substrate binding site. Catalysis depends on H107, which acts as the Proton donor. Residues 109–111 (NVR) and 259–261 (GGR) each bind substrate. The important for dimerization stretch occupies residues 241–276 (YAEFNLVIDRGTKFGLQSGGRTESILISLPPRARWG).

Belongs to the aerobic coproporphyrinogen-III oxidase family. In terms of assembly, homodimer.

It localises to the cytoplasm. The catalysed reaction is coproporphyrinogen III + O2 + 2 H(+) = protoporphyrinogen IX + 2 CO2 + 2 H2O. The protein operates within porphyrin-containing compound metabolism; protoporphyrin-IX biosynthesis; protoporphyrinogen-IX from coproporphyrinogen-III (O2 route): step 1/1. In terms of biological role, involved in the heme biosynthesis. Catalyzes the aerobic oxidative decarboxylation of propionate groups of rings A and B of coproporphyrinogen-III to yield the vinyl groups in protoporphyrinogen-IX. In Leishmania major, this protein is Oxygen-dependent coproporphyrinogen-III oxidase.